Reading from the N-terminus, the 201-residue chain is Potassium-transporting ATPase KdpC subunit (201 aa).

The helical transmembrane segment at 13 to 33 (IIFMIFTILCGGIYTIFITGI) threads the bilayer.

The protein belongs to the KdpC family. As to quaternary structure, the system is composed of three essential subunits: KdpA, KdpB and KdpC.

The protein resides in the cell membrane. Part of the high-affinity ATP-driven potassium transport (or Kdp) system, which catalyzes the hydrolysis of ATP coupled with the electrogenic transport of potassium into the cytoplasm. This subunit acts as a catalytic chaperone that increases the ATP-binding affinity of the ATP-hydrolyzing subunit KdpB by the formation of a transient KdpB/KdpC/ATP ternary complex. This chain is Potassium-transporting ATPase KdpC subunit, found in Clostridium botulinum (strain Eklund 17B / Type B).